Consider the following 141-residue polypeptide: Large ribosomal subunit protein uL11B (141 aa).

Belongs to the universal ribosomal protein uL11 family. As to quaternary structure, part of the ribosomal stalk of the 50S ribosomal subunit. Interacts with L10 and the large rRNA to form the base of the stalk. L10 forms an elongated spine to which L12 dimers bind in a sequential fashion forming a multimeric L10(L12)X complex. In terms of processing, one or more lysine residues are methylated.

Functionally, forms part of the ribosomal stalk which helps the ribosome interact with GTP-bound translation factors. The polypeptide is Large ribosomal subunit protein uL11B (Halalkalibacterium halodurans (strain ATCC BAA-125 / DSM 18197 / FERM 7344 / JCM 9153 / C-125) (Bacillus halodurans)).